Reading from the N-terminus, the 106-residue chain is UPF0060 membrane protein R01043 (106 aa).

The next 4 membrane-spanning stretches (helical) occupy residues 5 to 25, 31 to 51, 61 to 81, and 85 to 105; these read AIYF…WSWL, ALWL…LTMV, AAYG…AEGV, and HWDM…LAGP.

This sequence belongs to the UPF0060 family.

It localises to the cell inner membrane. This is UPF0060 membrane protein R01043 from Rhizobium meliloti (strain 1021) (Ensifer meliloti).